A 369-amino-acid polypeptide reads, in one-letter code: Flagellar P-ring protein (369 aa).

Positions 1-22 (MFNVRQLIATTLLLSCAFAAQA) are cleaved as a signal peptide.

It belongs to the FlgI family. As to quaternary structure, the basal body constitutes a major portion of the flagellar organelle and consists of four rings (L,P,S, and M) mounted on a central rod.

The protein resides in the periplasm. It localises to the bacterial flagellum basal body. In terms of biological role, assembles around the rod to form the L-ring and probably protects the motor/basal body from shearing forces during rotation. In Pseudomonas putida (strain ATCC 47054 / DSM 6125 / CFBP 8728 / NCIMB 11950 / KT2440), this protein is Flagellar P-ring protein.